The following is a 339-amino-acid chain: Dihydroorotate dehydrogenase (quinone) (339 aa).

FMN is bound by residues 64 to 68 (AGADK) and T88. Residue K68 coordinates substrate. Residue 113–117 (NRNGF) coordinates substrate. N141 and N174 together coordinate FMN. Residue N174 coordinates substrate. The Nucleophile role is filled by S177. N179 provides a ligand contact to substrate. The FMN site is built by K219 and T247. A substrate-binding site is contributed by 248–249 (NT). Residues G270, G299, and 320-321 (YS) contribute to the FMN site.

Belongs to the dihydroorotate dehydrogenase family. Type 2 subfamily. As to quaternary structure, monomer. The cofactor is FMN.

Its subcellular location is the cell membrane. It catalyses the reaction (S)-dihydroorotate + a quinone = orotate + a quinol. The protein operates within pyrimidine metabolism; UMP biosynthesis via de novo pathway; orotate from (S)-dihydroorotate (quinone route): step 1/1. Catalyzes the conversion of dihydroorotate to orotate with quinone as electron acceptor. The protein is Dihydroorotate dehydrogenase (quinone) (pyrD) of Haemophilus influenzae (strain ATCC 51907 / DSM 11121 / KW20 / Rd).